The primary structure comprises 383 residues: Histidine decarboxylase (383 aa).

H120 provides a ligand contact to substrate. K233 bears the N6-(pyridoxal phosphate)lysine mark.

It belongs to the group II decarboxylase family. As to quaternary structure, homotetramer. Requires pyridoxal 5'-phosphate as cofactor.

The enzyme catalyses L-histidine + H(+) = histamine + CO2. The protein is Histidine decarboxylase of Acinetobacter baumannii (strain AB307-0294).